The primary structure comprises 296 residues: Light-independent protochlorophyllide reductase iron-sulfur ATP-binding protein (296 aa).

Residues 39–44 (GIGKST) and K68 contribute to the ATP site. S43 provides a ligand contact to Mg(2+). The [4Fe-4S] cluster site is built by C124 and C158. 209–210 (NR) contacts ATP.

This sequence belongs to the NifH/BchL/ChlL family. In terms of assembly, homodimer. Protochlorophyllide reductase is composed of three subunits; ChlL, ChlN and ChlB. The cofactor is [4Fe-4S] cluster.

It carries out the reaction chlorophyllide a + oxidized 2[4Fe-4S]-[ferredoxin] + 2 ADP + 2 phosphate = protochlorophyllide a + reduced 2[4Fe-4S]-[ferredoxin] + 2 ATP + 2 H2O. It functions in the pathway porphyrin-containing compound metabolism; chlorophyll biosynthesis (light-independent). In terms of biological role, component of the dark-operative protochlorophyllide reductase (DPOR) that uses Mg-ATP and reduced ferredoxin to reduce ring D of protochlorophyllide (Pchlide) to form chlorophyllide a (Chlide). This reaction is light-independent. The L component serves as a unique electron donor to the NB-component of the complex, and binds Mg-ATP. The chain is Light-independent protochlorophyllide reductase iron-sulfur ATP-binding protein from Prochlorococcus marinus (strain MIT 9313).